A 1326-amino-acid chain; its full sequence is Probable serine/threonine-protein kinase gdt8 (1326 aa).

An N-terminal signal peptide occupies residues 1 to 22 (MINKILIKLITIIIFCFSFLFA). The Extracellular segment spans residues 23–782 (EEDLIRTPPG…VDRNENLELK (760 aa)). 2 disordered regions span residues 419–467 (VDQN…GNQG) and 731–762 (EPPT…QTPI). Composition is skewed to low complexity over residues 422–460 (NNNN…NNNN) and 731–761 (EPPT…TQTP). The chain crosses the membrane as a helical span at residues 783–803 (IALPICLSLALLIGIIIMICI). Residues 804–1326 (FKKVQSNSKL…TKEDKDLDEN (523 aa)) are Cytoplasmic-facing. The segment at 833 to 858 (IVSQPPTVIEEKPQDNSKPDDQKLIE) is disordered. The span at 841–858 (IEEKPQDNSKPDDQKLIE) shows a compositional bias: basic and acidic residues. One can recognise a Protein kinase domain in the interval 1036 to 1292 (IKTEQLIASY…FSEISLHLEI (257 aa)). Residues 1042 to 1050 (IASYLPSKV) and Lys1065 contribute to the ATP site. The active-site Proton acceptor is Asp1158. The tract at residues 1301–1326 (MNESEESTSNHNTNSKTKEDKDLDEN) is disordered. Basic and acidic residues predominate over residues 1316 to 1326 (KTKEDKDLDEN).

In the N-terminal section; belongs to the GDT family. The protein in the C-terminal section; belongs to the protein kinase superfamily. TKL Ser/Thr protein kinase family.

The protein localises to the membrane. The catalysed reaction is L-seryl-[protein] + ATP = O-phospho-L-seryl-[protein] + ADP + H(+). It carries out the reaction L-threonyl-[protein] + ATP = O-phospho-L-threonyl-[protein] + ADP + H(+). This is Probable serine/threonine-protein kinase gdt8 (gdt8) from Dictyostelium discoideum (Social amoeba).